The sequence spans 438 residues: Transmembrane protein 184C (438 aa).

The next 7 membrane-spanning stretches (helical) occupy residues 17–37 (LVAVIYLVSIVVAVPLCVWEL), 48–68 (AWFIAGIFLLLTIPISLWVIL), 86–106 (ILWMVPIYSLDSWIALKYPGI), 179–199 (YTVVRPFTTIVALICELLGIY), 212–232 (YLVIINNMSQLFAMYCLLLFY), 254–274 (VVFVSFWQAVVIALLVKVGVI), and 287–307 (AVATGLQDFIICIEMFLAAIA). Residues 355-438 (RGHPRKKLFP…KEPSDKSVDS (84 aa)) form a disordered region. Composition is skewed to low complexity over residues 374–390 (SLLSSSSQDAISIASSM) and 404–413 (TVTPQTTPTT). Residue Ser422 is modified to Phosphoserine. The span at 425–438 (IGEKKEPSDKSVDS) shows a compositional bias: basic and acidic residues.

The protein belongs to the TMEM184 family. Widely expressed with higher expression in lung, kidney, spleen, pancreas, thymus, prostate, testis, ovary, small intestine and thyroid.

Its subcellular location is the membrane. Possible tumor suppressor which may play a role in cell growth. The polypeptide is Transmembrane protein 184C (TMEM184C) (Homo sapiens (Human)).